Consider the following 214-residue polypeptide: MRIILLGAPGAGKGTQAQFIMEKYGIPQISTGDMLRAAVKAGSELGLKAKEIMDAGKLVTDELVIALVKERITQDDCRDGFLLDGFPRTIPQADAMKEAGIKVDYVLEFDVPDDLIVERIVGRRVHAASGRVYHVKFNPPKVEDKDDVTGEDLTIRKDDQEATVRKRLVEYHQQTAPLVSYYRKEADAGNTQYFKLDGTRKVAEVSAELATILG.

Residue 10–15 participates in ATP binding; sequence GAGKGT. The segment at 30–59 is NMP; that stretch reads STGDMLRAAVKAGSELGLKAKEIMDAGKLV. AMP is bound by residues Thr-31, Arg-36, 57-59, 85-88, and Gln-92; these read KLV and GFPR. Residues 122 to 159 form an LID region; sequence GRRVHAASGRVYHVKFNPPKVEDKDDVTGEDLTIRKDD. Residues Arg-123 and 132 to 133 contribute to the ATP site; that span reads VY. Residues Arg-156 and Arg-167 each coordinate AMP. Arg-200 provides a ligand contact to ATP.

It belongs to the adenylate kinase family. Monomer.

The protein localises to the cytoplasm. The catalysed reaction is AMP + ATP = 2 ADP. It functions in the pathway purine metabolism; AMP biosynthesis via salvage pathway; AMP from ADP: step 1/1. Its function is as follows. Catalyzes the reversible transfer of the terminal phosphate group between ATP and AMP. Plays an important role in cellular energy homeostasis and in adenine nucleotide metabolism. The polypeptide is Adenylate kinase (Yersinia enterocolitica serotype O:8 / biotype 1B (strain NCTC 13174 / 8081)).